The chain runs to 344 residues: Heat-inducible transcription repressor HrcA (344 aa).

This sequence belongs to the HrcA family.

Functionally, negative regulator of class I heat shock genes (grpE-dnaK-dnaJ and groELS operons). Prevents heat-shock induction of these operons. The polypeptide is Heat-inducible transcription repressor HrcA (Streptococcus agalactiae serotype Ia (strain ATCC 27591 / A909 / CDC SS700)).